We begin with the raw amino-acid sequence, 778 residues long: NAD-dependent deacetylase sir2B (778 aa).

ANK repeat units follow at residues 83–112 (LNWT…EISI), 114–142 (RYTA…VPNG), 148–178 (DMET…SMNS), 191–221 (HGVS…DINS), 225–255 (DNST…ELMN), 260–289 (YGNS…KIII), 317–354 (DGST…QVNG), 358–390 (GNAT…DPTI), and 394–423 (YGWT…LTNS). A disordered region spans residues 438 to 458 (SSTSTSSSSSSSSSSSSSSSS). Positions 465–778 (KEELKLKGIE…DYFNTLFNSF (314 aa)) constitute a Deacetylase sirtuin-type domain. His608 (proton acceptor) is an active-site residue. Residues Cys616, Cys619, Cys642, and Cys647 each coordinate Zn(2+). The tract at residues 727–746 (KLKQQQENESGESSNDNDNN) is disordered. Residues 733-746 (ENESGESSNDNDNN) show a composition bias toward low complexity.

This sequence belongs to the sirtuin family. Zn(2+) serves as cofactor.

It catalyses the reaction N(6)-acetyl-L-lysyl-[protein] + NAD(+) + H2O = 2''-O-acetyl-ADP-D-ribose + nicotinamide + L-lysyl-[protein]. Functionally, NAD-dependent deacetylase, which plays an important role in the regulation of transcriptional repression. This is NAD-dependent deacetylase sir2B (sir2B) from Dictyostelium discoideum (Social amoeba).